A 62-amino-acid polypeptide reads, in one-letter code: Short neurotoxin A (62 aa).

Positions Arg1 to Ser16 are enriched in polar residues. The interval Arg1–Glu21 is disordered. 4 disulfides stabilise this stretch: Cys3/Cys24, Cys17/Cys41, Cys43/Cys54, and Cys55/Cys60.

The protein belongs to the three-finger toxin family. Short-chain subfamily. Type I alpha-neurotoxin sub-subfamily. Expressed by the venom gland.

The protein resides in the secreted. Functionally, binds to muscle nicotinic acetylcholine receptor (nAChR) and inhibit acetylcholine from binding to the receptor, thereby impairing neuromuscular transmission. This Laticauda crockeri (Crocker's sea snake) protein is Short neurotoxin A.